The following is a 588-amino-acid chain: Adenine deaminase (588 aa).

This sequence belongs to the metallo-dependent hydrolases superfamily. Adenine deaminase family. In terms of assembly, homodimer. Mn(2+) is required as a cofactor.

The enzyme catalyses adenine + H2O + H(+) = hypoxanthine + NH4(+). This Escherichia coli O45:K1 (strain S88 / ExPEC) protein is Adenine deaminase.